A 132-amino-acid chain; its full sequence is UPF0102 protein LI0223 (132 aa).

It belongs to the UPF0102 family.

The chain is UPF0102 protein LI0223 from Lawsonia intracellularis (strain PHE/MN1-00).